The chain runs to 501 residues: Cytochrome P450 6j1 (501 aa).

Cys-444 provides a ligand contact to heme.

The protein belongs to the cytochrome P450 family. Heme is required as a cofactor.

It localises to the endoplasmic reticulum membrane. The protein localises to the microsome membrane. This chain is Cytochrome P450 6j1 (CYP6J1), found in Blattella germanica (German cockroach).